Reading from the N-terminus, the 351-residue chain is Probable dual-specificity RNA methyltransferase RlmN (351 aa).

Catalysis depends on Glu92, which acts as the Proton acceptor. The Radical SAM core domain maps to 98–332 (TDQRLTVCIS…VSLRASRGLD (235 aa)). Cys105 and Cys337 are joined by a disulfide. Residues Cys112, Cys116, and Cys119 each contribute to the [4Fe-4S] cluster site. S-adenosyl-L-methionine-binding positions include 159 to 160 (GE), Ser189, 218 to 220 (SLH), and Asn294. Residue Cys337 is the S-methylcysteine intermediate of the active site.

This sequence belongs to the radical SAM superfamily. RlmN family. It depends on [4Fe-4S] cluster as a cofactor.

Its subcellular location is the cytoplasm. The catalysed reaction is adenosine(2503) in 23S rRNA + 2 reduced [2Fe-2S]-[ferredoxin] + 2 S-adenosyl-L-methionine = 2-methyladenosine(2503) in 23S rRNA + 5'-deoxyadenosine + L-methionine + 2 oxidized [2Fe-2S]-[ferredoxin] + S-adenosyl-L-homocysteine. It catalyses the reaction adenosine(37) in tRNA + 2 reduced [2Fe-2S]-[ferredoxin] + 2 S-adenosyl-L-methionine = 2-methyladenosine(37) in tRNA + 5'-deoxyadenosine + L-methionine + 2 oxidized [2Fe-2S]-[ferredoxin] + S-adenosyl-L-homocysteine. Its function is as follows. Specifically methylates position 2 of adenine 2503 in 23S rRNA and position 2 of adenine 37 in tRNAs. This is Probable dual-specificity RNA methyltransferase RlmN from Synechococcus sp. (strain CC9902).